A 239-amino-acid chain; its full sequence is MMDLFETNTYLFNDLRYLEEGDHGPLQHLDMPGVSPLYDGNHSPLSPGPDNVPSETGGESSGDEHVLAPPGLRAHCEGQCLMWACKVCKRKSAPTDRRKAATLRERRRLKKINEAFDALKRKSVANPNQRLPKVEILRSAISYIERLQELLQSLDEQERGQSGASDTRNDKEQNRPSGGDYCWKKASETWPTSADHSAIINQRDGACESSASSSLLCLSSIVSSISDDKTDLRQGVQED.

A disordered region spans residues Gln27–Glu64. Residues Asp96 to Leu147 form the bHLH domain. The segment at Asp155–Lys184 is disordered.

Efficient DNA binding requires dimerization with another bHLH protein.

It is found in the nucleus. In terms of biological role, involved in muscle differentiation (myogenic factor). Induces fibroblasts to differentiate into myoblasts. Probable sequence specific DNA-binding protein. This Tetraodon nigroviridis (Spotted green pufferfish) protein is Myogenic factor 6 (myf6).